A 268-amino-acid chain; its full sequence is MSIDLEWCKLDSSLATYLVEVLNRQLGNAERPSFIGPVEVTSLDFGSASPDVELVDLRDIYRDFLEDDEEGSDRGPVKVTEGAEDEEGFEWVGEYDRGASIPATNVTSSLDTRSDQPDDQKAPLLPPPPAENPHPNLQLHLHVNWHSNLRITLTTSLLINYPSPMFMSLPIKLSVTGLIFIGELAVAYEGERRRVHLCILDDLDPYGPAGDRQRLLPSIYIESEIGQADKHVLKNVTRVERFIQDVIRKTVEEELVFPNFHTIVMADS.

The SMP-LTD domain maps to 1–266; the sequence is MSIDLEWCKL…FPNFHTIVMA (266 aa). The segment at 66-136 is disordered; it reads EDDEEGSDRG…PPPAENPHPN (71 aa). Positions 102-111 are enriched in polar residues; that stretch reads PATNVTSSLD. Residues 112–121 show a composition bias toward basic and acidic residues; it reads TRSDQPDDQK.

Belongs to the MDM12 family. As to quaternary structure, component of the ER-mitochondria encounter structure (ERMES) or MDM complex, composed of MMM1, MDM10, MDM12 and MDM34. An MMM1 homodimer associates with one molecule of MDM12 on each side in a pairwise head-to-tail manner, and the SMP-LTD domains of MMM1 and MDM12 generate a continuous hydrophobic tunnel for phospholipid trafficking.

It is found in the mitochondrion outer membrane. It localises to the endoplasmic reticulum membrane. Functionally, component of the ERMES/MDM complex, which serves as a molecular tether to connect the endoplasmic reticulum (ER) and mitochondria. Components of this complex are involved in the control of mitochondrial shape and protein biogenesis, and function in nonvesicular lipid trafficking between the ER and mitochondria. MDM12 is required for the interaction of the ER-resident membrane protein MMM1 and the outer mitochondrial membrane-resident beta-barrel protein MDM10. The MDM12-MMM1 subcomplex functions in the major beta-barrel assembly pathway that is responsible for biogenesis of all mitochondrial outer membrane beta-barrel proteins, and acts in a late step after the SAM complex. The MDM10-MDM12-MMM1 subcomplex further acts in the TOM40-specific pathway after the action of the MDM12-MMM1 complex. Essential for establishing and maintaining the structure of mitochondria and maintenance of mtDNA nucleoids. This is Mitochondrial distribution and morphology protein 12 from Laccaria bicolor (strain S238N-H82 / ATCC MYA-4686) (Bicoloured deceiver).